The primary structure comprises 254 residues: Probable transcriptional regulatory protein MAE_13580 (254 aa).

It belongs to the TACO1 family.

Its subcellular location is the cytoplasm. The chain is Probable transcriptional regulatory protein MAE_13580 from Microcystis aeruginosa (strain NIES-843 / IAM M-2473).